The primary structure comprises 670 residues: DUF724 domain-containing protein 1 (670 aa).

Disordered stretches follow at residues 283-315 (HNGP…PMTP) and 368-445 (ANAE…NNDD). 3 stretches are compositionally biased toward polar residues: residues 294–309 (SPSN…SSSG), 379–392 (RNQN…TQQM), and 426–442 (CNGS…SICN). Positions 484–669 (PFAKKLPFWK…LEFQTTVSTP (186 aa)) constitute a DUF724 domain.

Expressed in stems and flowers.

It localises to the nucleus. Functionally, may be involved in the polar growth of plant cells via transportation of RNAs. The polypeptide is DUF724 domain-containing protein 1 (Arabidopsis thaliana (Mouse-ear cress)).